A 267-amino-acid chain; its full sequence is Translation initiation factor 2 subunit alpha (267 aa).

Residues 12 to 83 (GEIVMATVER…KRKYANLSLR (72 aa)) form the S1 motif domain.

The protein belongs to the eIF-2-alpha family. Heterotrimer composed of an alpha, a beta and a gamma chain.

In terms of biological role, eIF-2 functions in the early steps of protein synthesis by forming a ternary complex with GTP and initiator tRNA. This chain is Translation initiation factor 2 subunit alpha, found in Methanopyrus kandleri (strain AV19 / DSM 6324 / JCM 9639 / NBRC 100938).